A 393-amino-acid polypeptide reads, in one-letter code: Chalcone synthase 2 (393 aa).

The active site involves cysteine 166.

The protein belongs to the thiolase-like superfamily. Chalcone/stilbene synthases family.

The catalysed reaction is (E)-4-coumaroyl-CoA + 3 malonyl-CoA + 3 H(+) = 2',4,4',6'-tetrahydroxychalcone + 3 CO2 + 4 CoA. Its pathway is secondary metabolite biosynthesis; flavonoid biosynthesis. Its function is as follows. The primary product of this enzyme is 4,2',4',6'-tetrahydroxychalcone (also termed naringenin-chalcone or chalcone) which can under specific conditions spontaneously isomerize into naringenin. The protein is Chalcone synthase 2 (CHS2) of Ruta graveolens (Common rue).